A 195-amino-acid polypeptide reads, in one-letter code: MELEVFAGQEKSELSMIEVARAILELRGRDHEMYFNDLVNEIQTYLEKSNSEIREALPLFYTELNVDGSFIPLGDNKWGLRSWYAIDEVDEEIIALEETDEEDNPKSRKKKRVNAFMDGDEDAIDYSDDDPEDEDSYEADPALNYDDENPDDEKNEADAYDAEINEIAPDDLDEDVDINEEDDEFSDDDAEGEEE.

Residues 14 to 83 (LSMIEVARAI…GDNKWGLRSW (70 aa)) enclose the HTH HARE-type domain. Acidic residues-rich tracts occupy residues 119-138 (GDED…DSYE) and 145-195 (YDDE…GEEE). The tract at residues 119–195 (GDEDAIDYSD…SDDDAEGEEE (77 aa)) is disordered.

The protein belongs to the RpoE family. As to quaternary structure, RNAP is composed of a core of 2 alpha, a beta and a beta' subunits. The core is associated with a delta subunit and one of several sigma factors.

In terms of biological role, participates in both the initiation and recycling phases of transcription. In the presence of the delta subunit, RNAP displays an increased specificity of transcription, a decreased affinity for nucleic acids, and an increased efficiency of RNA synthesis because of enhanced recycling. The protein is Probable DNA-directed RNA polymerase subunit delta of Streptococcus gordonii (strain Challis / ATCC 35105 / BCRC 15272 / CH1 / DL1 / V288).